A 236-amino-acid polypeptide reads, in one-letter code: Conserved regulator of innate immunity protein 3 (236 aa).

Residues 1–36 (MNTASLVRSLSRVALRSSQVVRMAAPRHFSQSAKVL) constitute a mitochondrion transit peptide.

The protein belongs to the MAM33 family.

The protein resides in the mitochondrion matrix. The protein is Conserved regulator of innate immunity protein 3 (cri-3) of Caenorhabditis elegans.